The chain runs to 1030 residues: Semaphorin-6A (1030 aa).

The first 18 residues, Met-1 to Ala-18, serve as a signal peptide directing secretion. At Gly-19–Thr-649 the chain is on the extracellular side. In terms of domain architecture, Sema spans Ser-24–Leu-512. N-linked (GlcNAc...) asparagine glycosylation is found at Asn-33, Asn-49, and Asn-65. 4 disulfides stabilise this stretch: Cys-107/Cys-117, Cys-135/Cys-144, Cys-258/Cys-369, and Cys-283/Cys-328. N-linked (GlcNAc...) asparagine glycosylation occurs at Asn-282. Residues Asn-434 and Asn-461 are each glycosylated (N-linked (GlcNAc...) asparagine). 4 cysteine pairs are disulfide-bonded: Cys-477–Cys-506, Cys-515–Cys-533, Cys-521–Cys-568, and Cys-525–Cys-542. A helical transmembrane segment spans residues Leu-650–Val-670. Residues Tyr-671 to Thr-1030 are Cytoplasmic-facing. Residue Ser-698 is modified to Phosphoserine. Disordered stretches follow at residues Ala-754 to Glu-778, Ser-860 to Gln-897, and Tyr-912 to Thr-1030. Over residues Tyr-920–Arg-936 the composition is skewed to polar residues. The segment covering Asn-937–Ser-952 has biased composition (low complexity). Ser-952 carries the phosphoserine modification. Composition is skewed to polar residues over residues Gln-970–Arg-997 and Pro-1018–Thr-1030.

It belongs to the semaphorin family. Active as a homodimer or oligomer. The SEMA6A homodimer interacts with a PLXNA2 homodimer, giving rise to a heterotetramer. Interacts with EVL. In terms of assembly, (Microbial infection) Interacts with P.sordellii toxin TcsL; semaphorins SEMA6A and SEMA6B constitute the major host receptors for TcsL in the vascular endothelium.

The protein localises to the cell membrane. Functionally, cell surface receptor for PLXNA2 that plays an important role in cell-cell signaling. Required for normal granule cell migration in the developing cerebellum. Promotes reorganization of the actin cytoskeleton and plays an important role in axon guidance in the developing central nervous system. Can act as repulsive axon guidance cue. Has repulsive action towards migrating granular neurons. May play a role in channeling sympathetic axons into the sympathetic chains and controlling the temporal sequence of sympathetic target innervation. Its function is as follows. (Microbial infection) Acts as a receptor for P.sordellii toxin TcsL in the in the vascular endothelium. In Homo sapiens (Human), this protein is Semaphorin-6A (SEMA6A).